The sequence spans 160 residues: S-ribosylhomocysteine lyase (160 aa).

Residues histidine 57, histidine 61, and cysteine 127 each coordinate Fe cation.

It belongs to the LuxS family. In terms of assembly, homodimer. It depends on Fe cation as a cofactor.

The enzyme catalyses S-(5-deoxy-D-ribos-5-yl)-L-homocysteine = (S)-4,5-dihydroxypentane-2,3-dione + L-homocysteine. In terms of biological role, involved in the synthesis of autoinducer 2 (AI-2) which is secreted by bacteria and is used to communicate both the cell density and the metabolic potential of the environment. The regulation of gene expression in response to changes in cell density is called quorum sensing. Catalyzes the transformation of S-ribosylhomocysteine (RHC) to homocysteine (HC) and 4,5-dihydroxy-2,3-pentadione (DPD). This is S-ribosylhomocysteine lyase from Streptococcus mutans serotype c (strain ATCC 700610 / UA159).